Consider the following 71-residue polypeptide: UPF0352 protein Asuc_0778 (71 aa).

The protein belongs to the UPF0352 family.

The polypeptide is UPF0352 protein Asuc_0778 (Actinobacillus succinogenes (strain ATCC 55618 / DSM 22257 / CCUG 43843 / 130Z)).